The following is a 308-amino-acid chain: D-alanine--D-alanine ligase (308 aa).

The region spanning 105-302 (KAIFRSLGLA…FPDLCERILD (198 aa)) is the ATP-grasp domain. 133–188 (DLPFGLPCVVKPAGEGSSVGVHLVNEAAELGPACRDAASHAGDVIVERYVKGTEVD) contributes to the ATP binding site. Residues aspartate 256, glutamate 269, and asparagine 271 each coordinate Mg(2+).

The protein belongs to the D-alanine--D-alanine ligase family. Mg(2+) serves as cofactor. Requires Mn(2+) as cofactor.

The protein localises to the cytoplasm. It catalyses the reaction 2 D-alanine + ATP = D-alanyl-D-alanine + ADP + phosphate + H(+). It functions in the pathway cell wall biogenesis; peptidoglycan biosynthesis. Functionally, cell wall formation. The polypeptide is D-alanine--D-alanine ligase (Anaeromyxobacter sp. (strain K)).